We begin with the raw amino-acid sequence, 266 residues long: 4-hydroxy-tetrahydrodipicolinate reductase (266 aa).

10–15 (GPRGRM) provides a ligand contact to NAD(+). Position 38 (lysine 38) interacts with NADP(+). NAD(+) contacts are provided by residues 99 to 101 (GTT) and 125 to 128 (APNF). Histidine 155 serves as the catalytic Proton donor/acceptor. Histidine 156 contacts (S)-2,3,4,5-tetrahydrodipicolinate. Lysine 159 (proton donor) is an active-site residue. A (S)-2,3,4,5-tetrahydrodipicolinate-binding site is contributed by 165-166 (GT).

The protein belongs to the DapB family.

It localises to the cytoplasm. It carries out the reaction (S)-2,3,4,5-tetrahydrodipicolinate + NAD(+) + H2O = (2S,4S)-4-hydroxy-2,3,4,5-tetrahydrodipicolinate + NADH + H(+). The enzyme catalyses (S)-2,3,4,5-tetrahydrodipicolinate + NADP(+) + H2O = (2S,4S)-4-hydroxy-2,3,4,5-tetrahydrodipicolinate + NADPH + H(+). The protein operates within amino-acid biosynthesis; L-lysine biosynthesis via DAP pathway; (S)-tetrahydrodipicolinate from L-aspartate: step 4/4. Its function is as follows. Catalyzes the conversion of 4-hydroxy-tetrahydrodipicolinate (HTPA) to tetrahydrodipicolinate. The protein is 4-hydroxy-tetrahydrodipicolinate reductase of Bacillus anthracis (strain A0248).